We begin with the raw amino-acid sequence, 294 residues long: Homoserine kinase (294 aa).

83 to 93 (RPKSGLGSSGA) provides a ligand contact to ATP.

The protein belongs to the GHMP kinase family. Homoserine kinase subfamily.

It is found in the cytoplasm. The catalysed reaction is L-homoserine + ATP = O-phospho-L-homoserine + ADP + H(+). The protein operates within amino-acid biosynthesis; L-threonine biosynthesis; L-threonine from L-aspartate: step 4/5. Its function is as follows. Catalyzes the ATP-dependent phosphorylation of L-homoserine to L-homoserine phosphate. This Pyrococcus abyssi (strain GE5 / Orsay) protein is Homoserine kinase.